The following is a 514-amino-acid chain: 1-pyrroline-5-carboxylate dehydrogenase (514 aa).

Catalysis depends on residues glutamate 286 and cysteine 320.

The protein belongs to the aldehyde dehydrogenase family. RocA subfamily.

The catalysed reaction is L-glutamate 5-semialdehyde + NAD(+) + H2O = L-glutamate + NADH + 2 H(+). It functions in the pathway amino-acid degradation; L-proline degradation into L-glutamate; L-glutamate from L-proline: step 2/2. The chain is 1-pyrroline-5-carboxylate dehydrogenase from Staphylococcus aureus (strain MW2).